Reading from the N-terminus, the 352-residue chain is Probable cytosolic iron-sulfur protein assembly protein CIAO1 homolog (352 aa).

WD repeat units follow at residues 14–53 (GHDD…PSEQ), 63–102 (CHTR…WEQV), 107–146 (GHEN…EFEC), 152–191 (GHSQ…WGCA), 200–240 (GHES…TSTP), 268–306 (HHRR…LTQP), and 319–352 (AHGA…WWLR).

It belongs to the WD repeat CIA1 family.

Essential component of the cytosolic iron-sulfur (Fe/S) protein assembly machinery. Required for the maturation of extramitochondrial Fe/S proteins. The polypeptide is Probable cytosolic iron-sulfur protein assembly protein CIAO1 homolog (Chlamydomonas reinhardtii (Chlamydomonas smithii)).